The sequence spans 183 residues: UPF0397 protein PBPRA2239 (183 aa).

5 helical membrane passes run 8–28 (VVLI…MFGI), 41–61 (AVLA…VGFI), 69–89 (FAGW…GLII), 110–130 (FALF…CSAY), and 147–167 (LIII…YILT).

It belongs to the UPF0397 family.

It localises to the cell membrane. The polypeptide is UPF0397 protein PBPRA2239 (Photobacterium profundum (strain SS9)).